Consider the following 533-residue polypeptide: Beta-1,4 N-acetylgalactosaminyltransferase 1 (533 aa).

Residues 1–7 lie on the Cytoplasmic side of the membrane; the sequence is MRLDRRA. The helical; Signal-anchor for type II membrane protein transmembrane segment at 8–25 threads the bilayer; the sequence is LYALVLLLACASLGLLYS. Topologically, residues 26-533 are lumenal; it reads STRNAPSLPN…KHRLQCMTAE (508 aa). N-linked (GlcNAc...) asparagine glycosylation is found at asparagine 79, asparagine 179, and asparagine 274. A disulfide bridge links cysteine 429 with cysteine 476.

The protein belongs to the glycosyltransferase 2 family. In terms of assembly, homodimer; disulfide-linked. As to expression, most abundant in brain, liver, lung, spleen and testis.

It is found in the golgi apparatus membrane. It catalyses the reaction a ganglioside GM3 (d18:1(4E)) + UDP-N-acetyl-alpha-D-galactosamine = a ganglioside GM2 (d18:1(4E)) + UDP + H(+). The enzyme catalyses a ganglioside GD3 (d18:1(4E)) + UDP-N-acetyl-alpha-D-galactosamine = a ganglioside GD2 (d18:1(4E)) + UDP + H(+). The catalysed reaction is a ganglioside GM3 + UDP-N-acetyl-alpha-D-galactosamine = a ganglioside GM2 + UDP + H(+). It carries out the reaction a ganglioside GD3 + UDP-N-acetyl-alpha-D-galactosamine = a ganglioside GD2 + UDP + H(+). It catalyses the reaction a ganglioside GD1a + UDP-N-acetyl-alpha-D-galactosamine = a ganglioside GalNAc-GD1a + UDP + H(+). The enzyme catalyses a ganglioside GT3 (d18:1(4E)) + UDP-N-acetyl-alpha-D-galactosamine = a ganglioside GT2 (d18:1(4E)) + UDP + H(+). The catalysed reaction is a beta-D-Gal-(1-&gt;4)-beta-D-Glc-(1&lt;-&gt;1)-Cer(d18:1(4E)) + UDP-N-acetyl-alpha-D-galactosamine = a ganglioside GA2 (d18:1(4E)) + UDP + H(+). It carries out the reaction a neolactoside IV(3)-alpha-NeuGc-nLc4Cer + UDP-N-acetyl-alpha-D-galactosamine = a neolactoside IV(4)-beta-GalNAc-IV(3)-alpha-NeuGc-nLc4Cer + UDP + H(+). The protein operates within sphingolipid metabolism. Involved in the biosynthesis of gangliosides GM2, GD2 and GA2. Its function is as follows. Involved in the biosynthesis of gangliosides GM2, GD2, GT2 and GA2 from GM3, GD3, GT3 and GA3, respectively. This chain is Beta-1,4 N-acetylgalactosaminyltransferase 1, found in Mus musculus (Mouse).